A 248-amino-acid polypeptide reads, in one-letter code: Deoxyribose-phosphate aldolase (248 aa).

Residue aspartate 117 is the Proton donor/acceptor of the active site. Lysine 179 serves as the catalytic Schiff-base intermediate with acetaldehyde. The active-site Proton donor/acceptor is lysine 208.

This sequence belongs to the DeoC/FbaB aldolase family. DeoC type 1 subfamily.

Its subcellular location is the cytoplasm. It catalyses the reaction 2-deoxy-D-ribose 5-phosphate = D-glyceraldehyde 3-phosphate + acetaldehyde. Its pathway is carbohydrate degradation; 2-deoxy-D-ribose 1-phosphate degradation; D-glyceraldehyde 3-phosphate and acetaldehyde from 2-deoxy-alpha-D-ribose 1-phosphate: step 2/2. Its function is as follows. Catalyzes a reversible aldol reaction between acetaldehyde and D-glyceraldehyde 3-phosphate to generate 2-deoxy-D-ribose 5-phosphate. This is Deoxyribose-phosphate aldolase from Thermotoga petrophila (strain ATCC BAA-488 / DSM 13995 / JCM 10881 / RKU-1).